A 71-amino-acid polypeptide reads, in one-letter code: Small integral membrane protein 31 (71 aa).

Residues 8–28 form a helical membrane-spanning segment; sequence LEVAFILLAFFIFSLFTLASI. Over residues 48 to 57 the composition is skewed to basic residues; it reads RKRKEFKGKK. The disordered stretch occupies residues 48 to 71; it reads RKRKEFKGKKNCSDEEHKIETMQP. Residue Asn-58 is glycosylated (N-linked (GlcNAc...) asparagine). Over residues 58–71 the composition is skewed to basic and acidic residues; it reads NCSDEEHKIETMQP.

The protein localises to the membrane. This chain is Small integral membrane protein 31, found in Mus musculus (Mouse).